We begin with the raw amino-acid sequence, 333 residues long: Glyceraldehyde-3-phosphate dehydrogenase (333 aa).

NAD(+)-binding positions include 11 to 12, aspartate 33, arginine 78, and serine 120; that span reads RI. D-glyceraldehyde 3-phosphate contacts are provided by residues 149-151, threonine 180, 209-210, and arginine 232; these read SCT and TG. The active-site Nucleophile is cysteine 150. Cysteine 150 is modified (S-nitrosocysteine). Asparagine 314 provides a ligand contact to NAD(+).

It belongs to the glyceraldehyde-3-phosphate dehydrogenase family. As to quaternary structure, homotetramer. In terms of processing, S-nitrosylation of Cys-150 leads to translocation to the nucleus.

The protein localises to the cytoplasm. It is found in the cytosol. It localises to the cytoskeleton. The protein resides in the nucleus. It carries out the reaction D-glyceraldehyde 3-phosphate + phosphate + NAD(+) = (2R)-3-phospho-glyceroyl phosphate + NADH + H(+). The enzyme catalyses S-nitroso-L-cysteinyl-[GAPDH] + L-cysteinyl-[protein] = L-cysteinyl-[GAPDH] + S-nitroso-L-cysteinyl-[protein]. It functions in the pathway carbohydrate degradation; glycolysis; pyruvate from D-glyceraldehyde 3-phosphate: step 1/5. In terms of biological role, has both glyceraldehyde-3-phosphate dehydrogenase and nitrosylase activities, thereby playing a role in glycolysis and nuclear functions, respectively. Glyceraldehyde-3-phosphate dehydrogenase is a key enzyme in glycolysis that catalyzes the first step of the pathway by converting D-glyceraldehyde 3-phosphate (G3P) into 3-phospho-D-glyceroyl phosphate. Participates in nuclear events including transcription, RNA transport, DNA replication and apoptosis. Nuclear functions are probably due to the nitrosylase activity that mediates cysteine S-nitrosylation of nuclear target proteins such as SIRT1, HDAC2 and PRKDC. The chain is Glyceraldehyde-3-phosphate dehydrogenase from Danio rerio (Zebrafish).